We begin with the raw amino-acid sequence, 83 residues long: Erabutoxin c (83 aa).

The N-terminal stretch at Met-1–Thr-21 is a signal peptide. The segment at Cys-24–Cys-38 is loop I. Intrachain disulfides connect Cys-24–Cys-45, Cys-38–Cys-62, Cys-64–Cys-75, and Cys-76–Cys-81. The segment at Ser-39 to Ser-44 is stretch between loop I and loop II. Positions Cys-45–Cys-62 are loop II. The tract at residues Cys-64–Cys-75 is loop III.

It belongs to the three-finger toxin family. Short-chain subfamily. Type I alpha-neurotoxin sub-subfamily. As to expression, expressed by the venom gland.

The protein resides in the secreted. Binds to muscle nicotinic acetylcholine receptor (nAChR) and inhibit acetylcholine from binding to the receptor, thereby impairing neuromuscular transmission. Binds to Torpedo marmorata nAChR (Kd=0.14 nM). The sequence is that of Erabutoxin c from Laticauda semifasciata (Black-banded sea krait).